Consider the following 690-residue polypeptide: Elongation factor G (690 aa).

The 276-residue stretch at 8–283 (EDYRNFGIMA…AVVDFLPSPL (276 aa)) folds into the tr-type G domain. GTP-binding positions include 17 to 24 (AHIDAGKT), 81 to 85 (DTPGH), and 135 to 138 (NKMD).

Belongs to the TRAFAC class translation factor GTPase superfamily. Classic translation factor GTPase family. EF-G/EF-2 subfamily.

It localises to the cytoplasm. In terms of biological role, catalyzes the GTP-dependent ribosomal translocation step during translation elongation. During this step, the ribosome changes from the pre-translocational (PRE) to the post-translocational (POST) state as the newly formed A-site-bound peptidyl-tRNA and P-site-bound deacylated tRNA move to the P and E sites, respectively. Catalyzes the coordinated movement of the two tRNA molecules, the mRNA and conformational changes in the ribosome. This chain is Elongation factor G, found in Nitrobacter hamburgensis (strain DSM 10229 / NCIMB 13809 / X14).